Reading from the N-terminus, the 474-residue chain is MSFPLIFERSRKGRRGLKLVKAVPKAEDLIPKEHLREVPPRLPEVDELTLVRHYTGLSRRQVGVDTTFYPLGSCTMKYNPKLHEEAARLFADLHPYQDPRTAQGALRLMWELGEYLKALTGMDAITLEPAAGAHGELTGILIIRAYHEDRGEGRTRRVVLVPDSAHGSNPATASMAGYQVREIPSGPEGEVDLEALKRELGPHVAALMLTNPNTLGLFERRILEISRLCKEAGVQLYYDGANLNAIMGWARPGDMGFDVVHLNLHKTFTVPHGGGGPGSGPVGVKAHLAPYLPVPLVERGEEGFYLDFDRPKSIGRVRSFYGNFLALVRAWAYIRTLGLEGLKKAAALAVLNARYLKELLKEKGYRVPYDGPSMHEFVAQPPEGFRALDLAKGLLELGFHPPTVYFPLIVKEALMVEPTETEAKETLEAFAEAMGALLKKPKEWLENAPYSTPVRRLDELRANKHPKLTYFDEG.

Residue lysine 266 is modified to N6-(pyridoxal phosphate)lysine.

This sequence belongs to the GcvP family. C-terminal subunit subfamily. As to quaternary structure, the glycine cleavage system is composed of four proteins: P, T, L and H. In this organism, the P 'protein' is a heterodimer of two subunits. It depends on pyridoxal 5'-phosphate as a cofactor.

The catalysed reaction is N(6)-[(R)-lipoyl]-L-lysyl-[glycine-cleavage complex H protein] + glycine + H(+) = N(6)-[(R)-S(8)-aminomethyldihydrolipoyl]-L-lysyl-[glycine-cleavage complex H protein] + CO2. Functionally, the glycine cleavage system catalyzes the degradation of glycine. The P protein binds the alpha-amino group of glycine through its pyridoxal phosphate cofactor; CO(2) is released and the remaining methylamine moiety is then transferred to the lipoamide cofactor of the H protein. The polypeptide is Probable glycine dehydrogenase (decarboxylating) subunit 2 (Thermus thermophilus (strain ATCC 27634 / DSM 579 / HB8)).